Here is a 325-residue protein sequence, read N- to C-terminus: Germination protease (325 aa).

Positions 1–7 (MYNVRTD) are excised as a propeptide.

Belongs to the peptidase A25 family. Homotetramer. Post-translationally, autoproteolytically processed. The inactive tetrameric zymogen termed p46 autoprocesses to a smaller form termed p41, which is active only during spore germination.

The catalysed reaction is Endopeptidase action with P4 Glu or Asp, P1 preferably Glu &gt; Asp, P1' hydrophobic and P2' Ala.. Initiates the rapid degradation of small, acid-soluble proteins during spore germination. This Clostridium perfringens (strain ATCC 13124 / DSM 756 / JCM 1290 / NCIMB 6125 / NCTC 8237 / Type A) protein is Germination protease.